Here is a 354-residue protein sequence, read N- to C-terminus: S-adenosylmethionine:tRNA ribosyltransferase-isomerase (354 aa).

This sequence belongs to the QueA family. Monomer.

It is found in the cytoplasm. It carries out the reaction 7-aminomethyl-7-carbaguanosine(34) in tRNA + S-adenosyl-L-methionine = epoxyqueuosine(34) in tRNA + adenine + L-methionine + 2 H(+). The protein operates within tRNA modification; tRNA-queuosine biosynthesis. Transfers and isomerizes the ribose moiety from AdoMet to the 7-aminomethyl group of 7-deazaguanine (preQ1-tRNA) to give epoxyqueuosine (oQ-tRNA). This is S-adenosylmethionine:tRNA ribosyltransferase-isomerase from Salmonella gallinarum (strain 287/91 / NCTC 13346).